The primary structure comprises 171 residues: Shikimate kinase (171 aa).

14-19 (GAGKST) is an ATP binding site. Serine 18 contacts Mg(2+). The substrate site is built by aspartate 36, arginine 60, and glycine 82. Residue arginine 120 participates in ATP binding. Substrate is bound at residue arginine 139. Residue glutamine 156 coordinates ATP.

Belongs to the shikimate kinase family. Monomer. Requires Mg(2+) as cofactor.

It localises to the cytoplasm. It catalyses the reaction shikimate + ATP = 3-phosphoshikimate + ADP + H(+). It functions in the pathway metabolic intermediate biosynthesis; chorismate biosynthesis; chorismate from D-erythrose 4-phosphate and phosphoenolpyruvate: step 5/7. Its function is as follows. Catalyzes the specific phosphorylation of the 3-hydroxyl group of shikimic acid using ATP as a cosubstrate. The chain is Shikimate kinase from Alteromonas mediterranea (strain DSM 17117 / CIP 110805 / LMG 28347 / Deep ecotype).